A 346-amino-acid chain; its full sequence is UPF0718 protein YraQ (346 aa).

9 consecutive transmembrane segments (helical) span residues 12–32, 71–91, 113–133, 146–166, 167–187, 223–243, 260–280, 296–316, and 326–346; these read PIQW…LWYV, MIYF…GSLI, LLGT…APVA, ALAF…FMGF, VLGW…VLLI, ALWT…LVLG, SLMW…PTAA, APAL…LIML, and WLTG…ALLF.

The protein belongs to the UPF0718 family.

It localises to the cell membrane. The chain is UPF0718 protein YraQ (yraQ) from Escherichia coli (strain K12).